Consider the following 623-residue polypeptide: Chaperone protein HtpG (623 aa).

The interval 1 to 341 (MEKREFKAES…SQDLSLNISR (341 aa)) is a; substrate-binding. The b stretch occupies residues 342–549 (EMLQHDRQLS…EGEVSIEMEK (208 aa)). Residues 550-623 (ILSAMPNNQG…FTNDICKLMK (74 aa)) are c.

It belongs to the heat shock protein 90 family. As to quaternary structure, homodimer.

The protein localises to the cytoplasm. Its function is as follows. Molecular chaperone. Has ATPase activity. The polypeptide is Chaperone protein HtpG (Clostridium perfringens (strain 13 / Type A)).